The primary structure comprises 507 residues: Maturase K (507 aa).

The protein belongs to the intron maturase 2 family. MatK subfamily.

The protein resides in the plastid. The protein localises to the chloroplast. Functionally, usually encoded in the trnK tRNA gene intron. Probably assists in splicing its own and other chloroplast group II introns. In Craterostigma plantagineum (Blue gem), this protein is Maturase K.